The sequence spans 330 residues: (11Z)-hexadec-11-enoyl-CoA conjugase (330 aa).

The next 2 helical transmembrane spans lie at 37-57 (IVVM…YGLY) and 65-85 (LATS…ITAG). A Histidine box-1 motif is present at residues 87 to 92 (HRLWSH). A helical membrane pass occupies residues 101–121 (LEILLMVFNSIAFQNTIFTWV). Residues 124 to 128 (HRLHH) carry the Histidine box-2 motif. Helical transmembrane passes span 185-205 (AIPF…MYFW) and 216-238 (TVLR…HLWG). Positions 264–268 (HNYHH) match the Histidine box-3 motif.

Belongs to the fatty acid desaturase type 1 family. Fe(2+) is required as a cofactor. As to expression, highly expressed in the pheromone gland.

It is found in the membrane. It catalyses the reaction an 11,12-saturated fatty acyl-CoA + 2 Fe(II)-[cytochrome b5] + O2 + 2 H(+) = an (11Z)-Delta(11)-fatty acyl-CoA + 2 Fe(III)-[cytochrome b5] + 2 H2O. The enzyme catalyses (11Z)-hexadecenoyl-CoA + AH2 + O2 = (10E,12Z)-hexadecadienoyl-CoA + A + 2 H2O. Its function is as follows. Fatty acid desaturase that catalyzes 2 consecutive steps in the biosynthesis of bombykol, a sex pheromone produced by the moth. First acts as an acyl-CoA Delta(11) desaturase (1) by catalyzing the formation of Delta(11) fatty acyl precursors. Then acts as a (11Z)-hexadec-11-enoyl-CoA conjugase (2) by converting a single cis double bond at position 11 of (11Z)-hexadec-11-enoyl-CoA into conjugated 10 trans and 12 cis double bonds. The polypeptide is (11Z)-hexadec-11-enoyl-CoA conjugase (Bombyx mori (Silk moth)).